The chain runs to 1361 residues: Protein transport protein SEC16B homolog (1361 aa).

Residue Ser-46 is modified to Phosphoserine. Disordered stretches follow at residues 82–109, 487–513, 984–1013, 1025–1062, 1163–1204, 1216–1235, and 1306–1361; these read NEGA…HSDA, VDDA…GRPP, PVGG…QEAT, SSLM…GRTP, ENKS…ARGR, NPPG…VQTA, and SVNG…EVEL. Positions 491–503 are enriched in low complexity; it reads PQSFQSSQLFSPS. Positions 996–1013 are enriched in polar residues; sequence TKGNLQGNEYQHQQQEAT. 3 stretches are compositionally biased toward polar residues: residues 1169-1200, 1222-1234, and 1308-1325; these read IPSN…NQFS, NSHT…SVQT, and NGDN…SWSG. The segment covering 1326 to 1354 has biased composition (low complexity); sequence NFNTSFTPPTSPSTFKPVLLNSSSSSLGE.

It belongs to the SEC16 family.

Its subcellular location is the golgi apparatus. The protein resides in the endoplasmic reticulum. Functionally, required for protein transport from the endoplasmic reticulum to the Golgi apparatus. The sequence is that of Protein transport protein SEC16B homolog from Arabidopsis thaliana (Mouse-ear cress).